Reading from the N-terminus, the 571-residue chain is 5' exonuclease Apollo (571 aa).

Disordered stretches follow at residues 346 to 386 and 431 to 487; these read TSRP…TDRN and MDDN…SMHD. Composition is skewed to basic and acidic residues over residues 367-386 and 453-468; these read NHDDMDSNDTEIDHDTTDRN and ECDHESPTKSSKEKSP. A compositionally biased stretch (polar residues) spans 470–487; the sequence is MGSTNSGEMCSSMDSMHD. The short motif at 501-532 is the TBM element; the sequence is NPQSVTSAIPITLESEQFEHWLLENFTIPAEE.

The protein belongs to the DNA repair metallo-beta-lactamase (DRMBL) family. As to quaternary structure, interacts with terf2; the interaction is direct.

It is found in the chromosome. It localises to the telomere. Its subcellular location is the nucleus. It carries out the reaction a beta-lactam + H2O = a substituted beta-amino acid. 5'-3' exonuclease that plays a central role in telomere maintenance and protection during S-phase. Participates in the protection of telomeres against non-homologous end-joining (NHEJ)-mediated repair, thereby ensuring that telomeres do not fuse. Plays a key role in telomeric loop (T loop) formation by being recruited by terf2 at the leading end telomeres and by processing leading-end telomeres immediately after their replication via its exonuclease activity: generates 3' single-stranded overhang at the leading end telomeres avoiding blunt leading-end telomeres that are vulnerable to end-joining reactions and expose the telomere end in a manner that activates the DNA repair pathways. Possesses beta-lactamase activity, catalyzing the hydrolysis of penicillin G and nitrocefin. Exhibits no activity towards other beta-lactam antibiotic classes including cephalosporins (cefotaxime) and carbapenems (imipenem). This is 5' exonuclease Apollo (dclre1b) from Danio rerio (Zebrafish).